Here is a 146-residue protein sequence, read N- to C-terminus: Hemoglobin subunit beta-1 (146 aa).

Positions 2-146 constitute a Globin domain; that stretch reads VWTNEERSII…VVSALGKQYH (145 aa). Residues histidine 63 and histidine 92 each contribute to the heme b site.

Belongs to the globin family. Hb1 is a heterotetramer of two alpha chains and two beta-1 chains. As to expression, red blood cells.

Involved in oxygen transport from gills to the various peripheral tissues. The protein is Hemoglobin subunit beta-1 (hbb1) of Pseudaphritis urvillii (Congolli).